The chain runs to 250 residues: Myelin basic protein (250 aa).

Over residues 1-28 (MGNHSGKRELSAEKASKDGEIHRGEAGK) the composition is skewed to basic and acidic residues. The segment at 1–150 (MGNHSGKREL…SQRSKYLATA (150 aa)) is disordered. Gly2 carries the post-translational modification N-acetylalanine. Residues Ser31 and Ser40 each carry the phosphoserine modification. A compositionally biased stretch (basic and acidic residues) spans 95 to 113 (FSRDAPGREDNTFKDRPSE). Ser96 carries the post-translational modification Phosphothreonine. A Phosphoserine modification is found at Glu113. The residue at position 122 (Glu122) is a Phosphothreonine. Position 125 is a phosphotyrosine (Thr125). Ala135, Arg139, Ser141, and Ser144 each carry phosphoserine. 2 positions are modified to phosphotyrosine: Tyr146 and Leu147. Thr149 is modified (phosphothreonine). At Ser151 the chain carries Phosphoserine. Ser151 carries the phosphotyrosine modification. A Phosphothreonine modification is found at Thr152. Residues Arg157 and Arg163 each carry the citrulline modification. Phosphothreonine is present on Thr167. A Phosphoserine modification is found at Ser172. An omega-N-methylarginine mark is found at Arg175 and Arg181. The tract at residues 175–250 (RFFSGDRGAP…SRSGSPMARR (76 aa)) is disordered. Ser188 is modified (phosphoserine). Thr197 is subject to Phosphothreonine. Over residues 197 to 206 (THYGSLPQKS) the composition is skewed to polar residues. The residue at position 199 (Tyr199) is a Phosphotyrosine. Position 206 is a phosphoserine (Ser206). Phosphothreonine is present on residues Thr211, Thr226, and Thr229. The residue at position 234 (Gln234) is a Deamidated glutamine. Arg239 carries the citrulline modification. At Ser241 the chain carries Phosphoserine. Residue Ser245 is modified to Phosphoserine; by UHMK1. At Arg250 the chain carries Citrulline.

The protein belongs to the myelin basic protein family. Homodimer. As in other animals, several charge isomers may be produced as a result of optional post-translational modifications, such as phosphorylation of serine or threonine residues, deamidation of glutamine or asparagine residues, citrullination and methylation of arginine residues. In terms of processing, methylated on arginine residues; decreases with the age of the animal, making MBP more cationic. Post-translationally, phosphorylated by TAOK2, VRK2, MAPK11, MAPK12, MAPK14 and MINK1. Proteolytically cleaved in B cell lysosomes by cathepsin CTSG which degrades the major immunogenic MBP epitope and prevents the activation of MBP-specific autoreactive T cells. In the embryo, isoform 1-isoform 3 are found in neurons within the central nervous system (primarily in pioneer neurons important in the formation of the cortex) and the peripheral nervous system. They are also expressed in the thymus, gut, lung and kidney. In the adult, isoform 1-isoform 3 are highly expressed in the brain (mainly in brain regions rich in oligodendrocytes) and spleen. Lower levels are seen in the heart, kidney and lung. Isoform 2 is also found in cells of the immune system. The isoforms missing the 134 first amino acids (isoform 4-isoform 13) are almost exclusively produced in the myelin-forming cells, the mature oligodendrocytes.

Its subcellular location is the myelin membrane. It is found in the cytoplasm. The protein localises to the nucleus. The classic group of MBP isoforms (isoform 4-isoform 13) are with PLP the most abundant protein components of the myelin membrane in the CNS. They have a role in both its formation and stabilization. The non-classic group of MBP isoforms (isoform 1-isoform 3/Golli-MBPs) may preferentially have a role in the early developing brain long before myelination, maybe as components of transcriptional complexes, and may also be involved in signaling pathways in T-cells and neural cells. Differential splicing events combined to optional post-translational modifications give a wide spectrum of isomers, with each of them potentially having a specialized function. This is Myelin basic protein (Mbp) from Mus musculus (Mouse).